The following is a 433-amino-acid chain: GTPase Obg (433 aa).

In terms of domain architecture, Obg spans 2–160; sequence PTFVDQTKIE…RVLRLELKLL (159 aa). An OBG-type G domain is found at 161–334; that stretch reads ADVGLVGFPS…LMNDTATLVE (174 aa). GTP contacts are provided by residues 167–174, 192–196, 214–217, 284–287, and 315–317; these read GFPSVGKS, FTTLT, DLPG, SQMD, and SSV. 2 residues coordinate Mg(2+): serine 174 and threonine 194. Residues 355–433 form the OCT domain; it reads YKAPQRNEFM…IGKFVFEFVQ (79 aa).

Belongs to the TRAFAC class OBG-HflX-like GTPase superfamily. OBG GTPase family. Monomer. It depends on Mg(2+) as a cofactor.

The protein localises to the cytoplasm. Its function is as follows. An essential GTPase which binds GTP, GDP and possibly (p)ppGpp with moderate affinity, with high nucleotide exchange rates and a fairly low GTP hydrolysis rate. Plays a role in control of the cell cycle, stress response, ribosome biogenesis and in those bacteria that undergo differentiation, in morphogenesis control. This Lactobacillus acidophilus (strain ATCC 700396 / NCK56 / N2 / NCFM) protein is GTPase Obg.